Here is a 463-residue protein sequence, read N- to C-terminus: Hydroxyacid-oxoacid transhydrogenase, mitochondrial (463 aa).

Belongs to the iron-containing alcohol dehydrogenase family. Hydroxyacid-oxoacid transhydrogenase subfamily.

Its subcellular location is the mitochondrion. The catalysed reaction is (S)-3-hydroxybutanoate + 2-oxoglutarate = (R)-2-hydroxyglutarate + acetoacetate. The enzyme catalyses 4-hydroxybutanoate + 2-oxoglutarate = (R)-2-hydroxyglutarate + succinate semialdehyde. In terms of biological role, catalyzes the cofactor-independent reversible oxidation of gamma-hydroxybutyrate (GHB) to succinic semialdehyde (SSA) coupled to reduction of 2-ketoglutarate (2-KG) to D-2-hydroxyglutarate (D-2-HG). L-3-hydroxybutyrate (L-3-OHB) is also a substrate for HOT when using 2-KG as hydrogen acceptor, resulting in the formation of D-2-HG. The sequence is that of Hydroxyacid-oxoacid transhydrogenase, mitochondrial (adhfe1) from Xenopus laevis (African clawed frog).